A 332-amino-acid chain; its full sequence is Aquaporin-7-2 (332 aa).

Polar residues predominate over residues 1-40 (MSGQHQITEQPSGNPLSRTSTLIQEKPLTPTSSHAGTQKQ). A disordered region spans residues 1-46 (MSGQHQITEQPSGNPLSRTSTLIQEKPLTPTSSHAGTQKQPEAPRQ). At 1–66 (MSGQHQITEQ…RHAIRKPMAE (66 aa)) the chain is on the cytoplasmic side. Residues 67 to 87 (FFGVALLIIFGAGSACQVVLS) form a helical membrane-spanning segment. Topologically, residues 88 to 100 (TNPDVASSARGSF) are extracellular. Residues 101-121 (LSINFGWAIGIAMGVWVSGGI) traverse the membrane as a helical segment. Residues 122-144 (SGGHINPAITIAMATYRGFPWCK) are Cytoplasmic-facing. The NPA 1 motif lies at 127–129 (NPA). A helical membrane pass occupies residues 145–165 (VPSYILAQVLGGVVGAALVYA). The Extracellular segment spans residues 166–199 (NYIHAIDVFEGGHHIRTEATASLFATYALPYMTQ). Residues 200–220 (ASCFFSEFLATAVLSMMVFAL) traverse the membrane as a helical segment. Topologically, residues 221–230 (TDKRNHSPTN) are cytoplasmic. Residues 231 to 251 (GLLPFALFILFVGLGASLGME) traverse the membrane as a helical segment. At 252–283 (TAYALNPARDFGPRLFLAMAGYGKALFNYRSQ) the chain is on the extracellular side. The NPA 2 signature appears at 257-259 (NPA). The chain crosses the membrane as a helical span at residues 284 to 304 (YWLWAPIIAPVLGAQAGGLLY). Topologically, residues 305–332 (DTFLNDGDNSPIKWRCASSQEQQLAEVV) are cytoplasmic.

Belongs to the MIP/aquaporin (TC 1.A.8) family.

It is found in the membrane. The catalysed reaction is H2O(in) = H2O(out). Functionally, water channel required to facilitate the transport of water across membranes. Does not mediate the transport carbon dioxide across the membrane. This is Aquaporin-7-2 from Laccaria bicolor (Bicoloured deceiver).